A 297-amino-acid chain; its full sequence is tRNA pseudouridine synthase B (297 aa).

The active-site Nucleophile is the Asp-44.

This sequence belongs to the pseudouridine synthase TruB family. Type 1 subfamily.

It carries out the reaction uridine(55) in tRNA = pseudouridine(55) in tRNA. Functionally, responsible for synthesis of pseudouridine from uracil-55 in the psi GC loop of transfer RNAs. The polypeptide is tRNA pseudouridine synthase B (Corynebacterium aurimucosum (strain ATCC 700975 / DSM 44827 / CIP 107346 / CN-1) (Corynebacterium nigricans)).